Reading from the N-terminus, the 595-residue chain is Elongation factor 4 (595 aa).

One can recognise a tr-type G domain in the interval 2–183 (KNIRNFCIIA…AIVEQVPAPA (182 aa)). Residues 14–19 (DHGKST) and 130–133 (NKVD) contribute to the GTP site.

It belongs to the TRAFAC class translation factor GTPase superfamily. Classic translation factor GTPase family. LepA subfamily.

It localises to the cell inner membrane. It catalyses the reaction GTP + H2O = GDP + phosphate + H(+). Functionally, required for accurate and efficient protein synthesis under certain stress conditions. May act as a fidelity factor of the translation reaction, by catalyzing a one-codon backward translocation of tRNAs on improperly translocated ribosomes. Back-translocation proceeds from a post-translocation (POST) complex to a pre-translocation (PRE) complex, thus giving elongation factor G a second chance to translocate the tRNAs correctly. Binds to ribosomes in a GTP-dependent manner. This is Elongation factor 4 from Porphyromonas gingivalis (strain ATCC 33277 / DSM 20709 / CIP 103683 / JCM 12257 / NCTC 11834 / 2561).